The following is a 484-amino-acid chain: PTS system MurNAc-GlcNAc-specific EIIBC component (484 aa).

The PTS EIIB type-1 domain maps to 5–87 (QQLAERIIAA…AELSGVKLGD (83 aa)). Catalysis depends on C27, which acts as the Phosphocysteine intermediate; for EIIB activity. The PTS EIIC type-1 domain maps to 130–484 (KSIANIFIPL…AMRQTDLLGD (355 aa)). 10 helical membrane-spanning segments follow: residues 135-155 (IFIP…IAAV), 160-180 (MVAG…FNVI), 200-220 (FGAT…TGIA), 234-254 (LQPG…LSIV), 274-294 (IALL…AGFV), 305-325 (IISI…LPLV), 349-369 (LLPI…ALWV), 384-404 (ALPV…TLPL), 408-428 (FLTA…IGHI), and 450-470 (LGYI…TYLF).

It localises to the cell membrane. It carries out the reaction N-acetyl-beta-D-muramate-(1-&gt;4)-N-acetyl-D-glucosamine(out) + N(pros)-phospho-L-histidyl-[protein] = 6-phospho-N-acetyl-beta-D-muramate-(1-&gt;4)-N-acetyl-D-glucosamine(in) + L-histidyl-[protein]. Its pathway is cell wall biogenesis; peptidoglycan recycling. Its function is as follows. The phosphoenolpyruvate-dependent sugar phosphotransferase system (sugar PTS), a major carbohydrate active transport system, catalyzes the phosphorylation of incoming sugar substrates concomitantly with their translocation across the cell membrane. This system is involved in the uptake and phosphorylation of MurNAc-GlcNAc, the principle peptidoglycan turnover product of S.aureus, yielding cytoplasmic MurNAc 6P-GlcNAc. The sequence is that of PTS system MurNAc-GlcNAc-specific EIIBC component from Staphylococcus aureus (strain Mu50 / ATCC 700699).